The following is a 345-amino-acid chain: Anthranilate phosphoribosyltransferase (345 aa).

Residues glycine 84, 87–88, threonine 92, 94–97, 112–120, and serine 124 each bind 5-phospho-alpha-D-ribose 1-diphosphate; these read GD, NVTT, and KHGNRSVSS. Glycine 84 contacts anthranilate. Threonine 96 contacts Mg(2+). Asparagine 115 lines the anthranilate pocket. Position 170 (arginine 170) interacts with anthranilate. The Mg(2+) site is built by aspartate 228 and glutamate 229.

This sequence belongs to the anthranilate phosphoribosyltransferase family. In terms of assembly, homodimer. Mg(2+) is required as a cofactor.

It catalyses the reaction N-(5-phospho-beta-D-ribosyl)anthranilate + diphosphate = 5-phospho-alpha-D-ribose 1-diphosphate + anthranilate. It participates in amino-acid biosynthesis; L-tryptophan biosynthesis; L-tryptophan from chorismate: step 2/5. Its function is as follows. Catalyzes the transfer of the phosphoribosyl group of 5-phosphorylribose-1-pyrophosphate (PRPP) to anthranilate to yield N-(5'-phosphoribosyl)-anthranilate (PRA). In Corynebacterium aurimucosum (strain ATCC 700975 / DSM 44827 / CIP 107346 / CN-1) (Corynebacterium nigricans), this protein is Anthranilate phosphoribosyltransferase.